The chain runs to 702 residues: Phosphoglycerol transferase I (702 aa).

A run of 3 helical transmembrane segments spans residues 3-25 (WILALSLLLLLLLLVASPRLAWL), 73-95 (GYIAVFIGMVLLSLSPLVLLRVR), and 102-124 (GGGAVFGAFVVMLLVSVAVSPLY).

This sequence belongs to the OpgB family.

It localises to the cell inner membrane. It carries out the reaction a phosphatidylglycerol + a membrane-derived-oligosaccharide D-glucose = a 1,2-diacyl-sn-glycerol + a membrane-derived-oligosaccharide 6-(glycerophospho)-D-glucose.. Its pathway is glycan metabolism; osmoregulated periplasmic glucan (OPG) biosynthesis. Transfers a phosphoglycerol residue from phosphatidylglycerol to the membrane-bound nascent glucan backbones. This chain is Phosphoglycerol transferase I, found in Xanthomonas campestris pv. campestris (strain ATCC 33913 / DSM 3586 / NCPPB 528 / LMG 568 / P 25).